Consider the following 214-residue polypeptide: uncharacterized protein (214 aa).

The signal sequence occupies residues 1–17 (MLKKIIILFLGVFVLSG). Cysteine 18 carries the N-palmitoyl cysteine lipid modification. Cysteine 18 is lipidated: S-diacylglycerol cysteine. Over residues 64-77 (DNLDDPEDDDDDYD) the composition is skewed to acidic residues. 3 disordered regions span residues 64-83 (DNLD…LRGE), 106-138 (YKAE…KERK), and 166-197 (TANQ…SKVK). The stretch at 120-162 (TLSKANKKVRKDNTDKERKMQEELDQIKAMLRETKRDISKYTC) forms a coiled coil.

Its subcellular location is the cell membrane. This is an uncharacterized protein from Rickettsia bellii (strain RML369-C).